The primary structure comprises 107 residues: Holo-[acyl-carrier-protein] synthase (107 aa).

Mg(2+)-binding residues include aspartate 10 and glutamate 54.

This sequence belongs to the P-Pant transferase superfamily. AcpS family. Requires Mg(2+) as cofactor.

The protein localises to the cytoplasm. The enzyme catalyses apo-[ACP] + CoA = holo-[ACP] + adenosine 3',5'-bisphosphate + H(+). Transfers the 4'-phosphopantetheine moiety from coenzyme A to a Ser of acyl-carrier-protein. This Mycoplasma mobile (strain ATCC 43663 / 163K / NCTC 11711) (Mesomycoplasma mobile) protein is Holo-[acyl-carrier-protein] synthase.